The primary structure comprises 320 residues: Cytochrome f (320 aa).

An N-terminal signal peptide occupies residues 1–36 (MKHTNSKQKLKDIINFCQAIFTLCIICLYQANISNS). Positions 37, 57, 60, and 61 each coordinate heme. The chain crosses the membrane as a helical span at residues 286 to 305 (LISFIFFSISVLISQLFFVL).

This sequence belongs to the cytochrome f family. As to quaternary structure, the 4 large subunits of the cytochrome b6-f complex are cytochrome b6, subunit IV (17 kDa polypeptide, petD), cytochrome f and the Rieske protein, while the 4 small subunits are PetG, PetL, PetM and PetN. The complex functions as a dimer. It depends on heme as a cofactor.

The protein localises to the plastid. It is found in the chloroplast thylakoid membrane. In terms of biological role, component of the cytochrome b6-f complex, which mediates electron transfer between photosystem II (PSII) and photosystem I (PSI), cyclic electron flow around PSI, and state transitions. In Cyanidium caldarium (Red alga), this protein is Cytochrome f (petA).